A 274-amino-acid polypeptide reads, in one-letter code: Putative deoxyribonuclease TATDN1 homolog (274 aa).

A divalent metal cation is bound by residues E105, H139, H162, and D208.

Belongs to the metallo-dependent hydrolases superfamily. TatD-type hydrolase family. Requires a divalent metal cation as cofactor.

The protein resides in the nucleus. Functionally, putative deoxyribonuclease. The polypeptide is Putative deoxyribonuclease TATDN1 homolog (Enterocytozoon bieneusi (strain H348) (Microsporidian parasite)).